A 773-amino-acid chain; its full sequence is MDVTSSSGGGDPRQIEETKPLLGSDVSGPEGTKVMGAVPCRRALLLCNGMRYKLLQEGDIQVCVIRHPRTFLSKILTSKFLRRWEPHHLTLADNSLASATPSGYMENSVSYSAIEDVQPLSWENAPKYCLQLTIPGGTVLLQAANSYLRDQWFHSLQWKKKIYKYKKVLSNPSRWEVVLKEIRTLVDMALTSPLQDDSINQAPLEIVSKLLSENTNLTTQEHENIIVAIAPLLENNHPPPDLCEFFCKHCRERPRSMVVIEVFTPVVQRILKHNMDFGKCPRLRLFTQEYILALNELNAGMEVVKKFIQSMHGPTGHCPHPRVLPNLVAVCLAAIYSCYEEFINSRDNSPSLKEIRNGCQQPCDRKPTLPLRLLHPSPDLVSQEATLSEPRLKSVVVASSEVHVEVERTSTAKPALTASTGNDSEPNLIDCLMVSPACGTMSIELGPQAGRTLGCHVEILKLLSDYDDWRPSLASLLQPIPFPKEALAHEKFTKELKYVIQRFAEDPRQEVHSCLLSVRAGKDGWFQLYSPGGVACDDDGELFASMVHILMGSCYKTKKFLLSLAENKLGPCMLLALRGNQTMAEILCLMLEYNIIDNNDTQLQIISTLESTDVGKRMYEQLCDRQRELKELQRKGGPTRLTLPSKSTDADLARLLSSGSFGNLENLSLAFTNVTSACAEHLIKLPSLKQLNLWSTQFGDAGLRLLSEHLTMLQVLNLCETPVTDAGLLALSSMKSLCSLNMNSTKLSADTYEDLKAKLPNLKEVDVRYTEAW.

Residues 1-28 (MDVTSSSGGGDPRQIEETKPLLGSDVSG) form a disordered region. The 110-residue stretch at 54 to 163 (LLQEGDIQVC…HSLQWKKKIY (110 aa)) folds into the PH domain. Serine 349, serine 377, serine 382, and serine 660 each carry phosphoserine. LRR repeat units follow at residues 663-686 (NLEN…IKLP), 687-707 (SLKQ…RLLS), 712-732 (MLQV…LALS), and 736-756 (SLCS…EDLK).

In terms of assembly, interacts with FLNA.

The protein resides in the nucleus. The protein localises to the cytoplasm. In terms of biological role, plays a role in T-cell signaling pathway. This Mus musculus (Mouse) protein is C-Maf-inducing protein (Cmip).